The primary structure comprises 389 residues: Probable peptidoglycan glycosyltransferase FtsW (389 aa).

Residues 1–14 (MPIRDWRQQSQRWP) are Cytoplasmic-facing. Residues 15–35 (IDYWLIGALAILITLGLTMVA) traverse the membrane as a helical segment. Topologically, residues 36 to 57 (SSSIAISEKRFGDPTHYLLRQM) are periplasmic. Residues 58–78 (FSMGLGLMAAYIVLKIPLSFW) traverse the membrane as a helical segment. Over 79-84 (RKHRGQ) the chain is Cytoplasmic. The helical transmembrane segment at 85–105 (LFIVGLVLLVLVLVFGREING) threads the bilayer. Residues 106 to 111 (SKRWLP) are Periplasmic-facing. The helical transmembrane segment at 112 to 132 (LVLMNFQVSEFMKIAVVVFMA) threads the bilayer. At 133–144 (GYLDRHATAVRE) the chain is on the cytoplasmic side. A helical membrane pass occupies residues 145–165 (SFEAVIRLALPFGVMAILLLL). The Periplasmic segment spans residues 166-168 (EPD). The helical transmembrane segment at 169–189 (FGSTFVIAVIITGMLLIAGAP) threads the bilayer. Residues 190–191 (WR) are Cytoplasmic-facing. A helical membrane pass occupies residues 192 to 212 (FFVMTVLPIATLLVMMVITSP). Topologically, residues 213–268 (YRMARVTNFLDPWSDPFGNGYQLTQALIASGRGEWFGVGIGESVQKLLYLPDAHTD) are periplasmic. Residues 269–289 (FLFSIYAEEYGLIGVAFLALL) traverse the membrane as a helical segment. Topologically, residues 290 to 310 (YLTLLYRCFRIGRKAFNQTHY) are cytoplasmic. Residues 311–331 (FGGLIAYGVGIWIVLQAMINM) form a helical membrane-spanning segment. At 332–344 (GVNLGLFPTKGLT) the chain is on the periplasmic side. A helical transmembrane segment spans residues 345-365 (LPFMSYGGSSVLMLFIGVAMV). The Cytoplasmic segment spans residues 366 to 389 (LRVDLETRQAVLEHSVDESGQGKR).

This sequence belongs to the SEDS family. FtsW subfamily.

The protein localises to the cell inner membrane. It carries out the reaction [GlcNAc-(1-&gt;4)-Mur2Ac(oyl-L-Ala-gamma-D-Glu-L-Lys-D-Ala-D-Ala)](n)-di-trans,octa-cis-undecaprenyl diphosphate + beta-D-GlcNAc-(1-&gt;4)-Mur2Ac(oyl-L-Ala-gamma-D-Glu-L-Lys-D-Ala-D-Ala)-di-trans,octa-cis-undecaprenyl diphosphate = [GlcNAc-(1-&gt;4)-Mur2Ac(oyl-L-Ala-gamma-D-Glu-L-Lys-D-Ala-D-Ala)](n+1)-di-trans,octa-cis-undecaprenyl diphosphate + di-trans,octa-cis-undecaprenyl diphosphate + H(+). It participates in cell wall biogenesis; peptidoglycan biosynthesis. Peptidoglycan polymerase that is essential for cell division. In Hydrogenovibrio crunogenus (strain DSM 25203 / XCL-2) (Thiomicrospira crunogena), this protein is Probable peptidoglycan glycosyltransferase FtsW.